Reading from the N-terminus, the 76-residue chain is UPF0729 protein C18orf32 homolog (76 aa).

The segment at 1–37 (MVCIPCIVIPVLLWVYKKFLEPYIYPLISPFVSRMWP) is necessary for its localzation to the endoplasmic reticulum and lipid droplets. Residues 47–56 (KNKGKVDYKG) are compositionally biased toward basic and acidic residues. Residues 47–76 (KNKGKVDYKGADINGLPTRGPTEMCDKKKD) are disordered.

It belongs to the UPF0729 family. In terms of assembly, interacts with DERL1 and AMFR. Post-translationally, undergoes ER-associated degradation (ERAD).

Its subcellular location is the endoplasmic reticulum. It localises to the lipid droplet. May activate the NF-kappa-B signaling pathway. The protein is UPF0729 protein C18orf32 homolog of Bos taurus (Bovine).